Reading from the N-terminus, the 226-residue chain is UPF0758 protein GK2618 (226 aa).

The 123-residue stretch at 104–226 (VIRCPEDGAK…FISLKEKGYV (123 aa)) folds into the MPN domain. Zn(2+) is bound by residues His-175, His-177, and Asp-188. The short motif at 175–188 (HNHPSGDPTPSRED) is the JAMM motif element.

It belongs to the UPF0758 family.

The sequence is that of UPF0758 protein GK2618 from Geobacillus kaustophilus (strain HTA426).